The following is a 573-amino-acid chain: Thiol:disulfide interchange protein DsbD (573 aa).

Positions 1–20 (MLKRFFLLLSSLLLVCNVQA) are cleaved as a signal peptide. Topologically, residues 21-175 (GLFNNKPQYL…AENLSNNYLS (155 aa)) are periplasmic. 2 cysteine pairs are disulfide-bonded: Cys121-Cys126 and Cys191-Cys313. A helical membrane pass occupies residues 176-196 (IFGFLLLGIGLAFTPCVLPML). Topologically, residues 197–227 (PLLSAIVIGHKNRPNTSRALLLSFTYVQGMA) are cytoplasmic. Residues 228–248 (LTYTLLGLTVAAIGLPFQVAL) traverse the membrane as a helical segment. Topologically, residues 249–251 (QSP) are periplasmic. A helical membrane pass occupies residues 252-272 (AVLISLAVLFTLLAASMFGLF). The Cytoplasmic segment spans residues 273–292 (EIRLPNTWQQKLNALSQQQQ). The helical transmembrane segment at 293–313 (GGAVGNVFIMGIIAGLVASPC) threads the bilayer. Over 314 to 331 (TSAPLSGALLYVAQSGNL) the chain is Periplasmic. A helical transmembrane segment spans residues 332–352 (LIGGLALYLLALGMGLPLILI). Over 353 to 365 (TVFGNQILPKSGE) the chain is Cytoplasmic. A helical transmembrane segment spans residues 366-386 (WLFKVKTAFGFVMLALPIFLI). At 387–393 (SRILPSH) the chain is on the periplasmic side. The helical transmembrane segment at 394-414 (YEPFLWSTLALAFLGWLISSL) threads the bilayer. Topologically, residues 415–425 (NYSTMLKQAVR) are cytoplasmic. A helical transmembrane segment spans residues 426–446 (ILLFIAFGLTAYPWANLVWQT). Residues 440–573 (ANLVWQTTSN…NQFLAWLNRL (134 aa)) enclose the Thioredoxin domain. Topologically, residues 447-573 (TSNTAQPTTP…NQFLAWLNRL (127 aa)) are periplasmic. The cysteines at positions 490 and 493 are disulfide-linked.

This sequence belongs to the thioredoxin family. DsbD subfamily.

It localises to the cell inner membrane. The catalysed reaction is [protein]-dithiol + NAD(+) = [protein]-disulfide + NADH + H(+). It carries out the reaction [protein]-dithiol + NADP(+) = [protein]-disulfide + NADPH + H(+). Functionally, required to facilitate the formation of correct disulfide bonds in some periplasmic proteins and for the assembly of the periplasmic c-type cytochromes. Acts by transferring electrons from cytoplasmic thioredoxin to the periplasm. This transfer involves a cascade of disulfide bond formation and reduction steps. This is Thiol:disulfide interchange protein DsbD from Haemophilus ducreyi (strain 35000HP / ATCC 700724).